A 321-amino-acid polypeptide reads, in one-letter code: tRNA(Ile)-lysidine synthase (321 aa).

30 to 35 serves as a coordination point for ATP; that stretch reads SGGSDS.

Belongs to the tRNA(Ile)-lysidine synthase family.

The protein localises to the cytoplasm. The catalysed reaction is cytidine(34) in tRNA(Ile2) + L-lysine + ATP = lysidine(34) in tRNA(Ile2) + AMP + diphosphate + H(+). Its function is as follows. Ligates lysine onto the cytidine present at position 34 of the AUA codon-specific tRNA(Ile) that contains the anticodon CAU, in an ATP-dependent manner. Cytidine is converted to lysidine, thus changing the amino acid specificity of the tRNA from methionine to isoleucine. This Chlamydia trachomatis serovar L2 (strain ATCC VR-902B / DSM 19102 / 434/Bu) protein is tRNA(Ile)-lysidine synthase.